The following is a 151-amino-acid chain: UPF0208 membrane protein ESA_00924 (151 aa).

2 consecutive transmembrane segments (helical) span residues 46–65 (FAIRIMPPVAVFTLCWQIAL) and 69–91 (LGPAVATALFALSMPMQGLWWLG).

Belongs to the UPF0208 family.

The protein resides in the cell inner membrane. In Cronobacter sakazakii (strain ATCC BAA-894) (Enterobacter sakazakii), this protein is UPF0208 membrane protein ESA_00924.